A 311-amino-acid chain; its full sequence is Deoxyhypusine hydroxylase (311 aa).

HEAT-like PBS-type repeat units follow at residues 69–95 (LKHE…VLEN), 102–128 (VRHE…YFKN), 196–222 (ERYR…GLDD), 228–254 (FKHE…TLKD), and 261–287 (VRHE…FLND). Residues H71, E72, H104, and E105 each coordinate Fe cation. Fe cation contacts are provided by H230, E231, H263, and E264.

This sequence belongs to the deoxyhypusine hydroxylase family. Fe(2+) serves as cofactor.

It localises to the cytoplasm. Its subcellular location is the nucleus. It carries out the reaction [eIF5A protein]-deoxyhypusine + AH2 + O2 = [eIF5A protein]-hypusine + A + H2O. Its pathway is protein modification; eIF5A hypusination. Its function is as follows. Catalyzes the hydroxylation of the N(6)-(4-aminobutyl)-L-lysine intermediate to form hypusine, an essential post-translational modification only found in mature eIF-5A factor. The chain is Deoxyhypusine hydroxylase from Debaryomyces hansenii (strain ATCC 36239 / CBS 767 / BCRC 21394 / JCM 1990 / NBRC 0083 / IGC 2968) (Yeast).